The chain runs to 171 residues: Nicotinamide-nucleotide adenylyltransferase (171 aa).

Belongs to the archaeal NMN adenylyltransferase family.

The protein resides in the cytoplasm. The catalysed reaction is beta-nicotinamide D-ribonucleotide + ATP + H(+) = diphosphate + NAD(+). It participates in cofactor biosynthesis; NAD(+) biosynthesis; NAD(+) from nicotinamide D-ribonucleotide: step 1/1. This Methanococcus maripaludis (strain C5 / ATCC BAA-1333) protein is Nicotinamide-nucleotide adenylyltransferase.